The following is a 515-amino-acid chain: MKLANYVYGQWIEGAGEGAALTDPVTGEALVRVSSDGIDVARALEFARTAGGAALKALTYEERAAKLAAIAELLQAKRAEYFDISLRNSGATEGDASFDVDGAIFTVKSYARAGKALGAGRHLKEGGRVALAKTDVFQGQHFLMPLTGVAVFINAFNFPAWGLWEKAAPALLAGVPVFAKPATPTAWLAQRMVADVVEAGILPPGAISIVCGGARDLLDHVTECDVVSFTGSADTAARMRTHPNVVARSVRINIEADSVNSAILGPDAQPGTPEFDLAVKEIVREMTVKTGQKCTAIRRILAPAGVSRALADAVSGKLAGCKVGNPRSEGVRVGPLVSKAQQAAAFEGLAKLRQECEVVFGGDPDFEPVDADAAVSAFVQPTLLYCDKGLAARHVHDVEVFGPVATMVPYADTRDAVAIARRGHGSLVASVYSGDAAFLGELVPGIADLHGRVMVVDAAVGANHTGHGNVMPTCLHGGPRARRRRRGVGRSARAGDVSPPLRRAGRPRGAGSPVA.

Residues E255 and C294 contribute to the active site. The tract at residues 470 to 515 (VMPTCLHGGPRARRRRRGVGRSARAGDVSPPLRRAGRPRGAGSPVA) is disordered. Basic residues predominate over residues 479–488 (PRARRRRRGV). The span at 489 to 515 (GRSARAGDVSPPLRRAGRPRGAGSPVA) shows a compositional bias: low complexity.

This sequence belongs to the aldehyde dehydrogenase family. As to quaternary structure, homodimer.

It carries out the reaction (3Z)-6-oxohex-3-enoyl-CoA + NADP(+) + H2O = cis-3,4-dehydroadipyl-CoA + NADPH + 2 H(+). Its function is as follows. Catalyzes the NADP-dependent oxidation of 3,4-dehydroadipyl-CoA semialdehyde to form cis-3,4-dehydroadipyl-CoA. This Aromatoleum evansii (Azoarcus evansii) protein is 3,4-dehydroadipyl-CoA semialdehyde dehydrogenase (boxD).